A 213-amino-acid chain; its full sequence is ATP phosphoribosyltransferase (213 aa).

Belongs to the ATP phosphoribosyltransferase family. Short subfamily. Heteromultimer composed of HisG and HisZ subunits.

Its subcellular location is the cytoplasm. It catalyses the reaction 1-(5-phospho-beta-D-ribosyl)-ATP + diphosphate = 5-phospho-alpha-D-ribose 1-diphosphate + ATP. Its pathway is amino-acid biosynthesis; L-histidine biosynthesis; L-histidine from 5-phospho-alpha-D-ribose 1-diphosphate: step 1/9. In terms of biological role, catalyzes the condensation of ATP and 5-phosphoribose 1-diphosphate to form N'-(5'-phosphoribosyl)-ATP (PR-ATP). Has a crucial role in the pathway because the rate of histidine biosynthesis seems to be controlled primarily by regulation of HisG enzymatic activity. The chain is ATP phosphoribosyltransferase from Bacillus velezensis (strain DSM 23117 / BGSC 10A6 / LMG 26770 / FZB42) (Bacillus amyloliquefaciens subsp. plantarum).